Consider the following 172-residue polypeptide: Adenine phosphoribosyltransferase (172 aa).

The protein belongs to the purine/pyrimidine phosphoribosyltransferase family. As to quaternary structure, homodimer.

It localises to the cytoplasm. The catalysed reaction is AMP + diphosphate = 5-phospho-alpha-D-ribose 1-diphosphate + adenine. It participates in purine metabolism; AMP biosynthesis via salvage pathway; AMP from adenine: step 1/1. Its function is as follows. Catalyzes a salvage reaction resulting in the formation of AMP, that is energically less costly than de novo synthesis. The chain is Adenine phosphoribosyltransferase from Synechocystis sp. (strain ATCC 27184 / PCC 6803 / Kazusa).